The sequence spans 178 residues: ATP synthase subunit delta (178 aa).

It belongs to the ATPase delta chain family. F-type ATPases have 2 components, F(1) - the catalytic core - and F(0) - the membrane proton channel. F(1) has five subunits: alpha(3), beta(3), gamma(1), delta(1), epsilon(1). F(0) has three main subunits: a(1), b(2) and c(10-14). The alpha and beta chains form an alternating ring which encloses part of the gamma chain. F(1) is attached to F(0) by a central stalk formed by the gamma and epsilon chains, while a peripheral stalk is formed by the delta and b chains.

The protein localises to the cell membrane. In terms of biological role, f(1)F(0) ATP synthase produces ATP from ADP in the presence of a proton or sodium gradient. F-type ATPases consist of two structural domains, F(1) containing the extramembraneous catalytic core and F(0) containing the membrane proton channel, linked together by a central stalk and a peripheral stalk. During catalysis, ATP synthesis in the catalytic domain of F(1) is coupled via a rotary mechanism of the central stalk subunits to proton translocation. Its function is as follows. This protein is part of the stalk that links CF(0) to CF(1). It either transmits conformational changes from CF(0) to CF(1) or is implicated in proton conduction. This chain is ATP synthase subunit delta, found in Streptococcus thermophilus (strain ATCC BAA-250 / LMG 18311).